We begin with the raw amino-acid sequence, 411 residues long: MKIYLVGGAVRDQLLGYPHHEQDWVVVGATPQQMLDAGFKPVGKDFPVFLHPETQEEYALARQERKTAPGYTGFAFHADETVTLEQDLLRRDLTINAIAMDEEGTIIDPYNGKRDIETRTLRHVSQAFCEDPVRILRIARFAARYHHLGFRIAPETLALMRDMVQAGEVDHLVAERVWKELSRALEEQHPAIFIQTLRECGALHRLMPELNALFGIPQPEAHHPEVDTGVHALLALERACELSSTPEVRFAALIHDLGKGVTPKHLWPSHHGHEQDGVALVEQLCNRLSTPNQFRELAVAVCAYHTHCHRAFELNAKTLLKTLLALDGLRRPERFQQFCLCCQADAQGRTGLENRPYPQAAYFLQALEEIQKVDAKMFVAQGKKGAEIGEAMYSARLQKIKLLKTAQTPHE.

Residues G8 and R11 each contribute to the ATP site. The CTP site is built by G8 and R11. Mg(2+) contacts are provided by E21 and D23. The ATP site is built by R91, R137, and R140. The CTP site is built by R91, R137, and R140. Residues 228-329 (TGVHALLALE…LKTLLALDGL (102 aa)) enclose the HD domain.

The protein belongs to the tRNA nucleotidyltransferase/poly(A) polymerase family. Bacterial CCA-adding enzyme type 1 subfamily. Monomer. Can also form homodimers and oligomers. Requires Mg(2+) as cofactor. Ni(2+) serves as cofactor.

The enzyme catalyses a tRNA precursor + 2 CTP + ATP = a tRNA with a 3' CCA end + 3 diphosphate. It catalyses the reaction a tRNA with a 3' CCA end + 2 CTP + ATP = a tRNA with a 3' CCACCA end + 3 diphosphate. Functionally, catalyzes the addition and repair of the essential 3'-terminal CCA sequence in tRNAs without using a nucleic acid template. Adds these three nucleotides in the order of C, C, and A to the tRNA nucleotide-73, using CTP and ATP as substrates and producing inorganic pyrophosphate. tRNA 3'-terminal CCA addition is required both for tRNA processing and repair. Also involved in tRNA surveillance by mediating tandem CCA addition to generate a CCACCA at the 3' terminus of unstable tRNAs. While stable tRNAs receive only 3'-terminal CCA, unstable tRNAs are marked with CCACCA and rapidly degraded. The sequence is that of Multifunctional CCA protein from Teredinibacter turnerae (strain ATCC 39867 / T7901).